We begin with the raw amino-acid sequence, 314 residues long: MEKIGNDYHIPVLYYETLDNLVINPDGTYIDCTLGGGSHSEGILERLSDKGLLISIDQDTNAIEYSKKRLEKFGSKWKVFKGNFENIDTIAYMAGVDKVDGILMDIGVSSKQLDDPDRGFSYRYDVKLDMRMNTDQKISAYDVVNTYSEEQLSKIIFEYGEERHARKIAKLIVEERKSSPIEKTSDLITLIKRAYPERASKHPAKKTFQAIRIEVNRELEVLENAMSKAVELLKVGGRLAIITFHSLEDRIVKNKFKDLATACKCPKDIPICVCGGVKKFEIITKKPIIPIDDELKNNNRAHSSKLRILERIFD.

Residues glycine 37–histidine 39, aspartate 57, phenylalanine 84, aspartate 105, and glutamine 112 contribute to the S-adenosyl-L-methionine site.

The protein belongs to the methyltransferase superfamily. RsmH family.

It is found in the cytoplasm. It carries out the reaction cytidine(1402) in 16S rRNA + S-adenosyl-L-methionine = N(4)-methylcytidine(1402) in 16S rRNA + S-adenosyl-L-homocysteine + H(+). Its function is as follows. Specifically methylates the N4 position of cytidine in position 1402 (C1402) of 16S rRNA. The protein is Ribosomal RNA small subunit methyltransferase H of Fusobacterium nucleatum subsp. nucleatum (strain ATCC 25586 / DSM 15643 / BCRC 10681 / CIP 101130 / JCM 8532 / KCTC 2640 / LMG 13131 / VPI 4355).